We begin with the raw amino-acid sequence, 289 residues long: Thioredoxin-like protein 1 (289 aa).

The Thioredoxin domain occupies 2–109; the sequence is VGVKPVGSDP…EEKIKQHLEN (108 aa). Cys34 and Cys37 form a disulfide bridge. At Ser113 the chain carries Phosphoserine. A PITH domain is found at 115-285; it reads EDTDIPKGYM…NDFKRVVGKK (171 aa).

Component of the 19S regulatory cap of the 26S proteasome. Interacts with PSMD14/RPN11. Interacts with, and reduces EEF1A1.

The protein localises to the cytoplasm. The protein resides in the nucleus. In terms of biological role, active thioredoxin with a redox potential of about -250 mV. The protein is Thioredoxin-like protein 1 (Txnl1) of Rattus norvegicus (Rat).